The chain runs to 92 residues: LYR motif-containing protein 4A (92 aa).

The protein belongs to the complex I LYR family.

The protein is LYR motif-containing protein 4A (lyrm4a) of Salmo salar (Atlantic salmon).